A 664-amino-acid chain; its full sequence is DNA ligase (664 aa).

Residues 32–36 (DKEYD) and 80–81 (SL) contribute to the NAD(+) site. The active-site N6-AMP-lysine intermediate is K122. R144, E178, and K314 together coordinate NAD(+). Zn(2+) is bound by residues C407, C410, C423, and C429. In terms of domain architecture, BRCT spans 587–664 (IDENPFMGKT…NEEEFSNKIK (78 aa)).

Belongs to the NAD-dependent DNA ligase family. LigA subfamily. The cofactor is Mg(2+). It depends on Mn(2+) as a cofactor.

The catalysed reaction is NAD(+) + (deoxyribonucleotide)n-3'-hydroxyl + 5'-phospho-(deoxyribonucleotide)m = (deoxyribonucleotide)n+m + AMP + beta-nicotinamide D-nucleotide.. In terms of biological role, DNA ligase that catalyzes the formation of phosphodiester linkages between 5'-phosphoryl and 3'-hydroxyl groups in double-stranded DNA using NAD as a coenzyme and as the energy source for the reaction. It is essential for DNA replication and repair of damaged DNA. The sequence is that of DNA ligase from Clostridium botulinum (strain Kyoto / Type A2).